Consider the following 269-residue polypeptide: Mitochondrial S-adenosylmethionine carrier protein (269 aa).

3 Solcar repeats span residues 4–77, 85–167, and 176–264; these read REFC…AKQL, LSPI…LKDL, and VDSW…VRTL. Transmembrane regions (helical) follow at residues 5–25, 49–69, 84–104, 141–161, 181–201, and 237–257; these read EFCA…LILF, IYAG…AFFV, YLSP…ACLI, RGYK…FPLW, SAVC…PLDV, and FAGV…FLGA.

It belongs to the mitochondrial carrier (TC 2.A.29) family.

It is found in the mitochondrion inner membrane. It catalyses the reaction S-adenosyl-L-homocysteine(out) + S-adenosyl-L-methionine(in) = S-adenosyl-L-homocysteine(in) + S-adenosyl-L-methionine(out). In terms of biological role, mitochondrial S-adenosyl-L-methionine/S-adenosyl-L-homocysteine antiporter. Mediates the exchange of cytosolic S-adenosyl-L-methionine, the predominant methyl-group donor for macromolecule methylation processes, for mitochondrial S-adenosylhomocysteine(SAH), a by-product of methylation reactions. This chain is Mitochondrial S-adenosylmethionine carrier protein (slc25a26), found in Xenopus tropicalis (Western clawed frog).